Reading from the N-terminus, the 218-residue chain is THAP domain-containing protein 3 (218 aa).

The segment at 1 to 82 (MPKSCAARQC…LKHNAVPTVF (82 aa)) adopts a THAP-type zinc-finger fold. Disordered regions lie at residues 97–120 (GGDS…PEGP) and 133–154 (ATEA…PGQP). Residue Ser-100 is modified to Phosphoserine. Positions 156–159 (DHSY) match the HCFC1-binding motif (HBM) motif.

As to quaternary structure, component of a THAP1/THAP3-HCFC1-OGT complex that contains at least, either THAP1 or THAP3, HCFC1 and OGT. Interacts directly with OGT and HCFC1 (via its HBM). As to expression, highest levels in heart, liver and kidney. Lower levels in brain and lung.

Component of a THAP1/THAP3-HCFC1-OGT complex that is required for the regulation of the transcriptional activity of RRM1. The chain is THAP domain-containing protein 3 (Thap3) from Mus musculus (Mouse).